Reading from the N-terminus, the 316-residue chain is Apolipoprotein E (316 aa).

Residues 1 to 18 (MKVLWVALVVALLAGCQA) form the signal peptide. Repeat copies occupy residues 79 to 100 (VLME…GQLA), 101 to 122 (PMAQ…ARLG), 123 to 144 (SDME…AMLG), 145 to 166 (QSTE…KRLL), 167 to 188 (RDAD…EGAE), 189 to 210 (RSVS…SRAA), 211 to 232 (TLST…QKLH), and 233 to 254 (GRLE…QQLE). Residues 79 to 254 (VLMEETMKEV…RLDKMRQQLE (176 aa)) form an 8 X 22 AA approximate tandem repeats region. Methionine 142 is subject to Methionine sulfoxide. Serine 146 is modified (phosphoserine). The LDL and other lipoprotein receptors binding stretch occupies residues 157–167 (HLRKLRKRLLR). 161–164 (LRKR) provides a ligand contact to heparin. The interval 209-289 (AATLSTQVGQ…SWFEPLVEDM (81 aa)) is lipid-binding and lipoprotein association. O-linked (GalNAc...) threonine glycosylation occurs at threonine 211. 228–235 (RQKLHGRL) serves as a coordination point for heparin. Positions 265–316 (SQIRLQAEAFQARLRSWFEPLVEDMQRQWAGLVEKVQLALHLSPTSPPSENH) are homooligomerization. Residues 277-289 (RLRSWFEPLVEDM) form a specificity for association with VLDL region.

The protein belongs to the apolipoprotein A1/A4/E family. In terms of assembly, homotetramer. May interact with ABCA1; functionally associated with ABCA1 in the biogenesis of HDLs. May interact with APP/A4 amyloid-beta peptide; the interaction is extremely stable in vitro but its physiological significance is unclear. May interact with MAPT. May interact with MAP2. In the cerebrospinal fluid, interacts with secreted SORL1. Interacts with PMEL; this allows the loading of PMEL luminal fragment on ILVs to induce fibril nucleation. In terms of processing, APOE exists as multiple glycosylated and sialylated glycoforms within cells and in plasma. The extent of glycosylation and sialylation are tissue and context specific. Glycated in plasma VLDL. Post-translationally, phosphorylated by FAM20C in the extracellular medium.

It localises to the secreted. It is found in the extracellular space. The protein resides in the extracellular matrix. The protein localises to the extracellular vesicle. Its subcellular location is the endosome. It localises to the multivesicular body. Its function is as follows. APOE is an apolipoprotein, a protein associating with lipid particles, that mainly functions in lipoprotein-mediated lipid transport between organs via the plasma and interstitial fluids. APOE is a core component of plasma lipoproteins and is involved in their production, conversion and clearance. Apolipoproteins are amphipathic molecules that interact both with lipids of the lipoprotein particle core and the aqueous environment of the plasma. As such, APOE associates with chylomicrons, chylomicron remnants, very low density lipoproteins (VLDL) and intermediate density lipoproteins (IDL) but shows a preferential binding to high-density lipoproteins (HDL). It also binds a wide range of cellular receptors including the LDL receptor/LDLR and the very low-density lipoprotein receptor/VLDLR that mediate the cellular uptake of the APOE-containing lipoprotein particles. Finally, APOE also has a heparin-binding activity and binds heparan-sulfate proteoglycans on the surface of cells, a property that supports the capture and the receptor-mediated uptake of APOE-containing lipoproteins by cells. The sequence is that of Apolipoprotein E (APOE) from Ovis aries musimon (Mouflon).